The sequence spans 306 residues: Porphobilinogen deaminase (306 aa).

Cysteine 239 bears the S-(dipyrrolylmethanemethyl)cysteine mark.

It belongs to the HMBS family. Monomer. Requires dipyrromethane as cofactor.

The catalysed reaction is 4 porphobilinogen + H2O = hydroxymethylbilane + 4 NH4(+). It functions in the pathway porphyrin-containing compound metabolism; protoporphyrin-IX biosynthesis; coproporphyrinogen-III from 5-aminolevulinate: step 2/4. In terms of biological role, tetrapolymerization of the monopyrrole PBG into the hydroxymethylbilane pre-uroporphyrinogen in several discrete steps. The chain is Porphobilinogen deaminase from Helicobacter pylori (strain G27).